A 440-amino-acid chain; its full sequence is Protein OSB3, chloroplastic/mitochondrial (440 aa).

Residues 1-61 (MNLISRTLTR…AKVSVKPPLN (61 aa)) constitute a chloroplast and mitochondrion transit peptide. Residues 80–178 (ISNWINLIGF…VMVQNLNFVQ (99 aa)) form the SSB domain. PDF region stretches follow at residues 218–270 (WKHL…LKLE), 294–342 (WKDL…SKLP), and 380–428 (WKNL…SKLP).

Expressed primarily in the female gametophyte and in the floral abscission zone.

Its subcellular location is the mitochondrion. It localises to the plastid. The protein resides in the chloroplast. Binds single-stranded DNA. In Arabidopsis thaliana (Mouse-ear cress), this protein is Protein OSB3, chloroplastic/mitochondrial (OSB3).